A 1345-amino-acid chain; its full sequence is Vascular endothelial growth factor receptor 2 (1345 aa).

Positions 1 to 19 are cleaved as a signal peptide; it reads MESKALLAVALWFCVETRA. Residues 20 to 762 lie on the Extracellular side of the membrane; sequence ASVGLPGDFL…EGAQEKTNLE (743 aa). Asn46, Asn98, Asn145, Asn160, and Asn247 each carry an N-linked (GlcNAc...) asparagine glycan. 7 Ig-like C2-type domains span residues 46 to 111, 143 to 209, 226 to 325, 330 to 416, 423 to 542, 549 to 656, and 665 to 751; these read NTTL…RDVD, NKNK…INDE, YDVI…TFVR, PFIA…HMVS, PQIG…RVIS, PEIT…LVKQ, and PMIT…TLFI. Cys53 and Cys105 are joined by a disulfide. A disulfide bond links Cys152 and Cys202. Cys248 and Cys309 are joined by a disulfide. 12 N-linked (GlcNAc...) asparagine glycosylation sites follow: Asn320, Asn376, Asn397, Asn509, Asn521, Asn578, Asn611, Asn617, Asn629, Asn673, Asn702, and Asn719. 2 disulfide bridges follow: Cys447/Cys528 and Cys569/Cys640. A disulfide bridge links Cys686 with Cys735. A helical membrane pass occupies residues 763-783; sequence VIILVGTAVIAMFFWLLLVIV. At 784–1345 the chain is on the cytoplasmic side; that stretch reads LRTVKRANEG…SGTTLRSPPV (562 aa). Tyr799 is subject to Phosphotyrosine. Residues 832 to 1160 form the Protein kinase domain; the sequence is LKLGKPLGRG…FSELVEHLGN (329 aa). ATP contacts are provided by residues 838-846 and Lys866; that span reads LGRGAFGQV. A Phosphotyrosine; by autocatalysis modification is found at Tyr949. Phosphoserine is present on residues Ser980 and Ser982. Tyr994 carries the post-translational modification Phosphotyrosine; by autocatalysis. An intrachain disulfide couples Cys1022 to Cys1043. Residue Asp1026 is the Proton acceptor of the active site. 4 positions are modified to phosphotyrosine; by autocatalysis: Tyr1052, Tyr1057, Tyr1173, and Tyr1212. 2 positions are modified to phosphoserine: Ser1229 and Ser1233. Phosphothreonine is present on Thr1236. Residues 1272-1316 are disordered; it reads DRNKLSPSFGGMMPSKSRESVASEGSNQTSGYQSGYHSDDTDTTV. Residues 1294–1307 show a composition bias toward polar residues; it reads SEGSNQTSGYQSGY. Tyr1303, Tyr1307, and Tyr1317 each carry phosphotyrosine; by autocatalysis.

The protein belongs to the protein kinase superfamily. Tyr protein kinase family. CSF-1/PDGF receptor subfamily. Homodimer in the presence of bound dimeric VEGFA, VEGFC or VEGFD ligands; monomeric in the absence of bound ligands. Can also form heterodimers with FLT1/VEGFR1 and KDR/VEGFR2. Interacts (tyrosine phosphorylated) with LFYN, NCK1, PLCG1. Interacts (tyrosine-phosphorylated active form preferentially) with DAB2IP (via C2 domain and active form preferentially); the interaction occurs at the late phase of VEGFA response and inhibits KDR/VEGFR2 activity. Interacts with SHBSH2D2A/TSAD, GRB2, MYOF, CBL and PDCD6. Interacts (via C-terminus domain) with ERN1 (via kinase domain); the interaction is facilitated in a XBP1 isoform 1- and vascular endothelial growth factor (VEGF)-dependent manner in endothelial cells. Interacts (via juxtamembrane region) with chaperone PDCL3 (via thioredoxin fold region); the interaction leads to increased KDR/VEGFR2 abundance through inhibition of its ubiquitination and degradation. Interacts (tyrosine phosphorylated) with CCDC88A/GIV (via SH2-like region); binding requires autophosphorylation of the KDR/VEGFR2 C-terminal region. Interacts with isoform 2 of BSG. Interacts with SLC31A1; this interaction is induced upon VEGFA stimulation leading to SLC31A1 and KDR subsequent co-internalization to early endosomes, thereby activating KDR downstream signaling in endothelial cells. Post-translationally, N-glycosylated. Ubiquitinated. Tyrosine phosphorylation of the receptor promotes its poly-ubiquitination, leading to its degradation via the proteasome or lysosomal proteases. In terms of processing, autophosphorylated on tyrosine residues upon ligand binding. Autophosphorylation occurs in trans, i.e. one subunit of the dimeric receptor phosphorylates tyrosine residues on the other subunit. Phosphorylation at Tyr-949 is important for interaction with SH2D2A/TSAD and VEGFA-mediated reorganization of the actin cytoskeleton. Phosphorylation at Tyr-1173 is important for interaction with PLCG1 and SHB. Phosphorylation at Tyr-1212 is important for interaction with NCK1 and FYN. Dephosphorylated by PTPRJ at Tyr-799, Tyr-949, Tyr-994, Tyr-1052, Tyr-1057, Tyr-1173 and Tyr-1212. Post-translationally, the inhibitory disulfide bond between Cys-1022 and Cys-1043 may serve as a specific molecular switch for H(2)S-induced modification that regulates KDR/VEGFR2 function. Expressed in endothelial cells (at protein level). Detected in embryonic endothelial cells, as well as hematopoietic stem and progenitor cells. Detected in vascular endothelium. Expressed at high levels in adult heart, lung, kidney, brain and skeletal muscle, but is also expressed at lower levels in most other adult tissues.

Its subcellular location is the cell junction. It localises to the endoplasmic reticulum. It is found in the cell membrane. The protein resides in the cytoplasm. The protein localises to the nucleus. Its subcellular location is the cytoplasmic vesicle. It localises to the early endosome. It is found in the secreted. It catalyses the reaction L-tyrosyl-[protein] + ATP = O-phospho-L-tyrosyl-[protein] + ADP + H(+). With respect to regulation, present in an inactive conformation in the absence of bound ligand. Binding of VEGFA, VEGFC or VEGFD leads to dimerization and activation by autophosphorylation on tyrosine residues. May be regulated by hydrogen sulfide (H(2)S) levels via a sensitive intracellular disulfide bond. Tyrosine-protein kinase that acts as a cell-surface receptor for VEGFA, VEGFC and VEGFD. Plays an essential role in the regulation of angiogenesis, vascular development, vascular permeability, and embryonic hematopoiesis. Promotes proliferation, survival, migration and differentiation of endothelial cells. Promotes reorganization of the actin cytoskeleton. Isoforms lacking a transmembrane domain, such as isoform 2, may function as decoy receptors for VEGFA, VEGFC and/or VEGFD. Isoform 2 plays an important role as a negative regulator of VEGFA- and VEGFC-mediated lymphangiogenesis by limiting the amount of free VEGFA and/or VEGFC and by preventing their binding to FLT4. Modulates FLT1 and FLT4 signaling by forming heterodimers. Binding of vascular growth factors to isoform 1 leads to the activation of several signaling cascades. Activation of PLCG1 leads to the production of the cellular signaling molecules diacylglycerol and inositol 1,4,5-trisphosphate and the activation of protein kinase C. Mediates activation of MAPK1/ERK2, MAPK3/ERK1 and the MAP kinase signaling pathway, as well as of the AKT1 signaling pathway. Mediates phosphorylation of PIK3R1, the regulatory subunit of phosphatidylinositol 3-kinase, reorganization of the actin cytoskeleton and activation of PTK2/FAK1. Required for VEGFA-mediated induction of NOS2 and NOS3, leading to the production of the signaling molecule nitric oxide (NO) by endothelial cells. Phosphorylates PLCG1. Promotes phosphorylation of FYN, NCK1, NOS3, PIK3R1, PTK2/FAK1 and SRC. The chain is Vascular endothelial growth factor receptor 2 from Mus musculus (Mouse).